Consider the following 652-residue polypeptide: Starch synthase 1, chloroplastic/amyloplastic (652 aa).

The N-terminal 49 residues, 1–49 (MASLQISGSVKFEPFVGFNRIRHFRPIASLGFPRFRRRFSIGRSLLLRR), are a transit peptide targeting the chloroplast. K156 contacts ADP-alpha-D-glucose.

This sequence belongs to the glycosyltransferase 1 family. Bacterial/plant glycogen synthase subfamily. In terms of tissue distribution, expressed in roots, leaves, stems, buds and flowers.

The protein localises to the plastid. The protein resides in the chloroplast. Its subcellular location is the amyloplast. The catalysed reaction is [(1-&gt;4)-alpha-D-glucosyl](n) + ADP-alpha-D-glucose = [(1-&gt;4)-alpha-D-glucosyl](n+1) + ADP + H(+). Its pathway is glycan biosynthesis; starch biosynthesis. In terms of biological role, involved in the synthesis of short glycan chains within amylopectin in leaves. Is required to generate chains up to about a degree of polymerization of 10 (DP10). The protein is Starch synthase 1, chloroplastic/amyloplastic (SS1) of Arabidopsis thaliana (Mouse-ear cress).